Reading from the N-terminus, the 97-residue chain is uncharacterized protein (97 aa).

A signal peptide spans Met-1–Cys-21.

This is an uncharacterized protein from Schizosaccharomyces pombe (strain 972 / ATCC 24843) (Fission yeast).